A 385-amino-acid polypeptide reads, in one-letter code: Acetate kinase (385 aa).

Asparagine 9 contributes to the Mg(2+) binding site. Lysine 16 contributes to the ATP binding site. Arginine 87 contacts substrate. The active-site Proton donor/acceptor is aspartate 144. ATP-binding positions include 202 to 206 and 277 to 279; these read HLGSG and DMR. Glutamate 373 provides a ligand contact to Mg(2+).

The protein belongs to the acetokinase family. As to quaternary structure, homodimer. Mg(2+) serves as cofactor. Requires Mn(2+) as cofactor.

The protein resides in the cytoplasm. The catalysed reaction is acetate + ATP = acetyl phosphate + ADP. It participates in metabolic intermediate biosynthesis; acetyl-CoA biosynthesis; acetyl-CoA from acetate: step 1/2. In terms of biological role, catalyzes the formation of acetyl phosphate from acetate and ATP. Can also catalyze the reverse reaction. This chain is Acetate kinase, found in Rickettsia prowazekii (strain Madrid E).